Reading from the N-terminus, the 222-residue chain is Acyl-protein thioesterase 1 homolog 2 (222 aa).

Catalysis depends on charge relay system residues S116, D169, and H202.

It belongs to the AB hydrolase superfamily. AB hydrolase 2 family.

The protein resides in the cytoplasm. It localises to the nucleus. It catalyses the reaction S-hexadecanoyl-L-cysteinyl-[protein] + H2O = L-cysteinyl-[protein] + hexadecanoate + H(+). In terms of biological role, hydrolyzes fatty acids from S-acylated cysteine residues in proteins with a strong preference for palmitoylated G-alpha proteins over other acyl substrates. Mediates the deacylation of G-alpha proteins such as GPA1 in vivo, but has weak or no activity toward palmitoylated Ras proteins. Has weak lysophospholipase activity in vitro; however such activity may not exist in vivo. The polypeptide is Acyl-protein thioesterase 1 homolog 2 (Dictyostelium discoideum (Social amoeba)).